We begin with the raw amino-acid sequence, 646 residues long: Beta-galactosidase-1-like protein (646 aa).

The N-terminal stretch at 1 to 23 is a signal peptide; the sequence is MPPDLPSLLLRLVVLLLLSQAEA. The N-linked (GlcNAc...) asparagine glycan is linked to N93. E182 acts as the Proton donor in catalysis. N239 carries an N-linked (GlcNAc...) asparagine glycan. Catalysis depends on E260, which acts as the Nucleophile.

The protein belongs to the glycosyl hydrolase 35 family.

Its subcellular location is the secreted. Probable glycosyl hydrolase. This Mus musculus (Mouse) protein is Beta-galactosidase-1-like protein (Glb1l).